We begin with the raw amino-acid sequence, 633 residues long: Chaperone protein HtpG (633 aa).

An a; substrate-binding region spans residues 1-341 (MTAPHETMSF…SADLPLNVSR (341 aa)). The tract at residues 342-562 (ELLQESRDVK…EGDMSGYLQR (221 aa)) is b. The interval 563–633 (LLKQAGQKAP…YVQRVNKLLA (71 aa)) is c.

Belongs to the heat shock protein 90 family. Homodimer.

Its subcellular location is the cytoplasm. In terms of biological role, molecular chaperone. Has ATPase activity. The polypeptide is Chaperone protein HtpG (Cupriavidus taiwanensis (strain DSM 17343 / BCRC 17206 / CCUG 44338 / CIP 107171 / LMG 19424 / R1) (Ralstonia taiwanensis (strain LMG 19424))).